Reading from the N-terminus, the 285-residue chain is 4-diphosphocytidyl-2-C-methyl-D-erythritol kinase (285 aa).

The active site involves Lys10. 93–103 (PIGGGLGGGSS) is a binding site for ATP. Residue Asp135 is part of the active site.

The protein belongs to the GHMP kinase family. IspE subfamily.

The enzyme catalyses 4-CDP-2-C-methyl-D-erythritol + ATP = 4-CDP-2-C-methyl-D-erythritol 2-phosphate + ADP + H(+). Its pathway is isoprenoid biosynthesis; isopentenyl diphosphate biosynthesis via DXP pathway; isopentenyl diphosphate from 1-deoxy-D-xylulose 5-phosphate: step 3/6. Functionally, catalyzes the phosphorylation of the position 2 hydroxy group of 4-diphosphocytidyl-2C-methyl-D-erythritol. This Vesicomyosocius okutanii subsp. Calyptogena okutanii (strain HA) protein is 4-diphosphocytidyl-2-C-methyl-D-erythritol kinase.